The chain runs to 1272 residues: Presporeless protein A (1272 aa).

The Nuclear localization signal signature appears at 146–161 (KDKRIKPIDPKKKISR). Disordered stretches follow at residues 369–403 (ASTI…DDTS) and 468–490 (STSS…NQLK). Positions 374–392 (DGEEEDDDDDDNDVDGNDD) are enriched in acidic residues. Positions 393–403 (DNNKEKVDDTS) are enriched in basic and acidic residues. The segment covering 468-487 (STSSTNTASSTRSKASSNSN) has biased composition (low complexity).

The protein localises to the nucleus. Functions autonomously, very early in the prespore pathway, to control prespore cell differentiation, maybe at the level of transcription. Also required for proper aggregation. This is Presporeless protein A (pslA) from Dictyostelium discoideum (Social amoeba).